A 376-amino-acid polypeptide reads, in one-letter code: Thymidine kinase (376 aa).

Residues 1 to 47 (MASHAGQQHAPAFGQAARASGPTDGRAASRPSHRQGASEARGDPELP) form a disordered region. 56-63 (GPHGVGKT) is an ATP binding site. Glu84 functions as the Proton acceptor in the catalytic mechanism. The substrate site is built by Tyr102 and Gln126. Arg217 is an ATP binding site. Position 223 (Arg223) interacts with substrate.

The protein belongs to the herpesviridae thymidine kinase family. As to quaternary structure, homodimer.

It catalyses the reaction thymidine + ATP = dTMP + ADP + H(+). In terms of biological role, catalyzes the transfer of the gamma-phospho group of ATP to thymidine to generate dTMP in the salvage pathway of pyrimidine synthesis. The dTMP serves as a substrate for DNA polymerase during viral DNA replication. Allows the virus to be reactivated and to grow in non-proliferative cells lacking a high concentration of phosphorylated nucleic acid precursors. This Human herpesvirus 2 (strain 333) (HHV-2) protein is Thymidine kinase.